The sequence spans 121 residues: Large ribosomal subunit protein uL18 (121 aa).

Belongs to the universal ribosomal protein uL18 family. Part of the 50S ribosomal subunit; part of the 5S rRNA/L5/L18/L25 subcomplex. Contacts the 5S and 23S rRNAs.

Functionally, this is one of the proteins that bind and probably mediate the attachment of the 5S RNA into the large ribosomal subunit, where it forms part of the central protuberance. The sequence is that of Large ribosomal subunit protein uL18 from Streptococcus equi subsp. zooepidemicus (strain MGCS10565).